The chain runs to 78 residues: Large ribosomal subunit protein bL28 (78 aa).

The disordered stretch occupies residues 1–20 (MSRVCQVTGKRPAVGNNRSH).

This sequence belongs to the bacterial ribosomal protein bL28 family.

The sequence is that of Large ribosomal subunit protein bL28 from Actinobacillus succinogenes (strain ATCC 55618 / DSM 22257 / CCUG 43843 / 130Z).